The following is a 371-amino-acid chain: Diguanylate cyclase A (371 aa).

The GGDEF domain occupies 233–366; that stretch reads ETLSILMIDI…GRNRVTLSKN (134 aa). Mg(2+)-binding residues include aspartate 241, isoleucine 242, and glutamate 284. The active-site Proton acceptor is the glutamate 284.

As to quaternary structure, exists as a homodimer and as larger aggregates. Both dimers and aggregates possess DGC activity. It depends on Mg(2+) as a cofactor. The cofactor is Mn(2+).

Its subcellular location is the cytoplasm. It carries out the reaction 2 GTP = 3',3'-c-di-GMP + 2 diphosphate. With respect to regulation, allosterically regulated by a feedback inhibition loop. Its function is as follows. Catalyzes the conversion of GTP to cyclic-di-GMP (c-di-GMP). Shows activity under aerobic and anaerobic reaction conditions. This is Diguanylate cyclase A from Treponema denticola (strain ATCC 35405 / DSM 14222 / CIP 103919 / JCM 8153 / KCTC 15104).